We begin with the raw amino-acid sequence, 102 residues long: uncharacterized protein (102 aa).

The signal sequence occupies residues 1-41; it reads MLFLDSYSLLIQFQRFKNWESPRRFSSSFPLLLFVFKPIFA.

This is an uncharacterized protein from Saccharomyces cerevisiae (strain ATCC 204508 / S288c) (Baker's yeast).